We begin with the raw amino-acid sequence, 145 residues long: Large ribosomal subunit protein uL14m (145 aa).

Residues M1–S30 constitute a mitochondrion transit peptide.

This sequence belongs to the universal ribosomal protein uL14 family. In terms of assembly, component of the mitochondrial ribosome large subunit (39S) which comprises a 16S rRNA and about 50 distinct proteins. Interacts with MALSU1.

It localises to the mitochondrion. May form part of 2 intersubunit bridges in the assembled ribosome. Upon binding to MALSU1, intersubunit bridge formation is blocked, preventing ribosome formation and repressing translation. The sequence is that of Large ribosomal subunit protein uL14m (Mrpl14) from Rattus norvegicus (Rat).